The chain runs to 392 residues: DNA replication and repair protein RecF (392 aa).

Residue 30–37 participates in ATP binding; that stretch reads GPNAAGKT.

It belongs to the RecF family.

It localises to the cytoplasm. In terms of biological role, the RecF protein is involved in DNA metabolism; it is required for DNA replication and normal SOS inducibility. RecF binds preferentially to single-stranded, linear DNA. It also seems to bind ATP. The protein is DNA replication and repair protein RecF of Chloroflexus aurantiacus (strain ATCC 29364 / DSM 637 / Y-400-fl).